A 291-amino-acid chain; its full sequence is UPF0173 metal-dependent hydrolase Rmet_5695 (291 aa).

This sequence belongs to the UPF0173 family.

The chain is UPF0173 metal-dependent hydrolase Rmet_5695 from Cupriavidus metallidurans (strain ATCC 43123 / DSM 2839 / NBRC 102507 / CH34) (Ralstonia metallidurans).